We begin with the raw amino-acid sequence, 298 residues long: tRNA pseudouridine synthase B (298 aa).

The active-site Nucleophile is the Asp-39.

This sequence belongs to the pseudouridine synthase TruB family. Type 1 subfamily.

The enzyme catalyses uridine(55) in tRNA = pseudouridine(55) in tRNA. Its function is as follows. Responsible for synthesis of pseudouridine from uracil-55 in the psi GC loop of transfer RNAs. The sequence is that of tRNA pseudouridine synthase B from Lactobacillus delbrueckii subsp. bulgaricus (strain ATCC BAA-365 / Lb-18).